The following is a 179-amino-acid chain: Coiled-coil domain-containing protein 32 (179 aa).

Positions E75 to K98 form a coiled coil. The segment at F157–Q179 is disordered. Over residues Q164–Q179 the composition is skewed to basic and acidic residues.

As to quaternary structure, interacts with AP2S1; the interaction is direct and mediates association with adaptor protein complex 2 (AP-2).

The protein resides in the membrane. Its subcellular location is the coated pit. In terms of biological role, regulates clathrin-mediated endocytsois of cargos such as transferrin probably through the association and modulation of adaptor protein complex 2 (AP-2). Has a role in ciliogenesis. Required for proper cephalic and left/right axis development. This is Coiled-coil domain-containing protein 32 (Ccdc32) from Rattus norvegicus (Rat).